The following is a 249-amino-acid chain: Cytochrome c oxidase subunit 2 (249 aa).

Residues 1 to 13 form the signal peptide; the sequence is MLNLFQIMNMINN. Topologically, residues 14–40 are mitochondrial intermembrane; sequence DVPTPYGFYFQDSATPNQEGILELHDN. A helical membrane pass occupies residues 41 to 62; that stretch reads IMFYLVVILGLVSWMLFTIVRT. Residues 63 to 80 lie on the Mitochondrial matrix side of the membrane; that stretch reads YSRNPMAYKYIKHGQTIE. A helical membrane pass occupies residues 81 to 105; that stretch reads IIWKIFPAVILLTIAFPSFILLYLC. The Mitochondrial intermembrane portion of the chain corresponds to 106-249; that stretch reads DEVISPAMTI…PKFLEWLNEQ (144 aa). Residues histidine 184, cysteine 219, glutamate 221, cysteine 223, histidine 227, and methionine 230 each coordinate Cu cation. Position 221 (glutamate 221) interacts with Mg(2+).

Belongs to the cytochrome c oxidase subunit 2 family. As to quaternary structure, component of the cytochrome c oxidase (complex IV, CIV), a multisubunit enzyme composed of a catalytic core of 3 subunits and several supernumerary subunits. The complex exists as a monomer or a dimer and forms supercomplexes (SCs) in the inner mitochondrial membrane with ubiquinol-cytochrome c oxidoreductase (cytochrome b-c1 complex, complex III, CIII). Cu cation serves as cofactor. In terms of processing, the signal sequence of COX2 is processed by IMP1.

The protein localises to the mitochondrion inner membrane. It carries out the reaction 4 Fe(II)-[cytochrome c] + O2 + 8 H(+)(in) = 4 Fe(III)-[cytochrome c] + 2 H2O + 4 H(+)(out). In terms of biological role, component of the cytochrome c oxidase, the last enzyme in the mitochondrial electron transport chain which drives oxidative phosphorylation. The respiratory chain contains 3 multisubunit complexes succinate dehydrogenase (complex II, CII), ubiquinol-cytochrome c oxidoreductase (cytochrome b-c1 complex, complex III, CIII) and cytochrome c oxidase (complex IV, CIV), that cooperate to transfer electrons derived from NADH and succinate to molecular oxygen, creating an electrochemical gradient over the inner membrane that drives transmembrane transport and the ATP synthase. Cytochrome c oxidase is the component of the respiratory chain that catalyzes the reduction of oxygen to water. Electrons originating from reduced cytochrome c in the intermembrane space (IMS) are transferred via the dinuclear copper A center (CU(A)) of subunit 2 and heme A of subunit 1 to the active site in subunit 1, a binuclear center (BNC) formed by heme A3 and copper B (CU(B)). The BNC reduces molecular oxygen to 2 water molecules using 4 electrons from cytochrome c in the IMS and 4 protons from the mitochondrial matrix. The chain is Cytochrome c oxidase subunit 2 (COX2) from Maudiozyma exigua (Yeast).